The sequence spans 450 residues: 23S rRNA (uracil(1939)-C(5))-methyltransferase RlmD (450 aa).

Positions 12–70 (SKQLSAKLSLNVDQLDHLGAGIAQYQGKVVFIPGALPDETVTVQLTEQKKNYARAKLIK) constitute a TRAM domain. Positions 83, 89, 92, and 171 each coordinate [4Fe-4S] cluster. The S-adenosyl-L-methionine site is built by Gln-283, Phe-312, Asn-317, Glu-333, Asp-360, and Asp-380. Cys-406 functions as the Nucleophile in the catalytic mechanism.

The protein belongs to the class I-like SAM-binding methyltransferase superfamily. RNA M5U methyltransferase family. RlmD subfamily.

It catalyses the reaction uridine(1939) in 23S rRNA + S-adenosyl-L-methionine = 5-methyluridine(1939) in 23S rRNA + S-adenosyl-L-homocysteine + H(+). In terms of biological role, catalyzes the formation of 5-methyl-uridine at position 1939 (m5U1939) in 23S rRNA. The protein is 23S rRNA (uracil(1939)-C(5))-methyltransferase RlmD of Shewanella sp. (strain W3-18-1).